A 538-amino-acid chain; its full sequence is Cytochrome P450 monooxygenase claM (538 aa).

A helical transmembrane segment spans residues 36–56 (LSIGLVVLIGAISSFLLQQFL). N-linked (GlcNAc...) asparagine glycosylation is found at Asn306 and Asn425. Cys472 provides a ligand contact to heme.

This sequence belongs to the cytochrome P450 family. Heme is required as a cofactor.

It localises to the membrane. The catalysed reaction is 2 nataloe emodin + reduced [NADPH--hemoprotein reductase] + O2 = cladofulvin + oxidized [NADPH--hemoprotein reductase] + 2 H2O + H(+). It participates in pigment biosynthesis. Cytochrome P450 monooxygenase; part of the gene cluster that mediates the biosynthesis of the bianthraquinone cladofulvin, a conidial pigment not required for virulence but that plays a role in fitness and resistance to environmental stresses including UV light and low-temperature stress. The pathway begins with the synthesis of atrochrysone thioester by the polyketide synthase (PKS) claG. The atrochrysone carboxyl ACP thioesterase claF then breaks the thioester bond and releases the atrochrysone carboxylic acid from claG. This compound is decarboxylated by claH to yield emodin, which is further converted to chrysophanol hydroquinone by the reductase claC and the dehydratase claB. The cytochrome monooxygenase P450 claM then catalyzes the dimerization of nataloe-emodin to cladofulvin. The polypeptide is Cytochrome P450 monooxygenase claM (Passalora fulva (Tomato leaf mold)).